Reading from the N-terminus, the 212-residue chain is Disintegrin-like halysetin (212 aa).

The 87-residue stretch at 4–90 folds into the Disintegrin domain; sequence PPVCGNELLE…ECPADVFHKN (87 aa). Disulfide bonds link Cys7–Cys26, Cys18–Cys36, Cys62–Cys82, Cys69–Cys94, Cys101–Cys106, Cys113–Cys128, Cys151–Cys158, Cys163–Cys174, and Cys200–Cys205. The D/ECD-tripeptide motif lies at 68-70; the sequence is ECD.

This sequence belongs to the venom metalloproteinase (M12B) family. P-III subfamily. P-IIIb sub-subfamily. As to quaternary structure, monomer. As to expression, expressed by the venom gland.

The protein resides in the secreted. Inhibits human platelet aggregation stimulated by collagen with an IC(50) of 420 nM. The protein is Disintegrin-like halysetin of Gloydius halys (Chinese water mocassin).